The primary structure comprises 385 residues: GTP cyclohydrolase 1 type 2 homolog (385 aa).

Positions 64, 65, 103, 333, and 337 each coordinate a divalent metal cation.

The protein belongs to the GTP cyclohydrolase I type 2/NIF3 family. In terms of assembly, homohexamer.

This Mycobacterium leprae (strain TN) protein is GTP cyclohydrolase 1 type 2 homolog.